The sequence spans 285 residues: Extracellular metalloprotease SMAC_06893 (285 aa).

Positions 1 to 18 (MQIKSLLLAAAAAPAALG) are cleaved as a signal peptide. Position 197 (His197) interacts with Zn(2+). Glu198 is a catalytic residue. His201 contacts Zn(2+). Residues Cys233 and Cys260 are joined by a disulfide bond. A glycan (N-linked (GlcNAc...) asparagine) is linked at Asn282.

It belongs to the peptidase M43B family.

The protein localises to the secreted. Its function is as follows. Secreted metalloproteinase that allows assimilation of proteinaceous substrates. In Sordaria macrospora (strain ATCC MYA-333 / DSM 997 / K(L3346) / K-hell), this protein is Extracellular metalloprotease SMAC_06893.